The following is a 444-amino-acid chain: Methylenetetrahydrofolate--tRNA-(uracil-5-)-methyltransferase TrmFO (444 aa).

An FAD-binding site is contributed by 9–14 (GAGMAG).

It belongs to the MnmG family. TrmFO subfamily. It depends on FAD as a cofactor.

It is found in the cytoplasm. The catalysed reaction is uridine(54) in tRNA + (6R)-5,10-methylene-5,6,7,8-tetrahydrofolate + NADH + H(+) = 5-methyluridine(54) in tRNA + (6S)-5,6,7,8-tetrahydrofolate + NAD(+). The enzyme catalyses uridine(54) in tRNA + (6R)-5,10-methylene-5,6,7,8-tetrahydrofolate + NADPH + H(+) = 5-methyluridine(54) in tRNA + (6S)-5,6,7,8-tetrahydrofolate + NADP(+). Catalyzes the folate-dependent formation of 5-methyl-uridine at position 54 (M-5-U54) in all tRNAs. The sequence is that of Methylenetetrahydrofolate--tRNA-(uracil-5-)-methyltransferase TrmFO from Cereibacter sphaeroides (strain ATCC 17023 / DSM 158 / JCM 6121 / CCUG 31486 / LMG 2827 / NBRC 12203 / NCIMB 8253 / ATH 2.4.1.) (Rhodobacter sphaeroides).